The sequence spans 153 residues: Transcriptional repressor NrdR (153 aa).

Residues 3–34 (CPSCFHNGTRVLDSRPVDEGRSIRRRRECESC) fold into a zinc finger. Residues 49-139 (LIVVKKEGTR…VYRQFKDLNV (91 aa)) enclose the ATP-cone domain.

Belongs to the NrdR family. The cofactor is Zn(2+).

Its function is as follows. Negatively regulates transcription of bacterial ribonucleotide reductase nrd genes and operons by binding to NrdR-boxes. In Bacillus cytotoxicus (strain DSM 22905 / CIP 110041 / 391-98 / NVH 391-98), this protein is Transcriptional repressor NrdR.